The sequence spans 433 residues: Histidinol dehydrogenase (433 aa).

Residues tyrosine 130, glutamine 191, and asparagine 214 each contribute to the NAD(+) site. 3 residues coordinate substrate: serine 237, glutamine 259, and histidine 262. Residues glutamine 259 and histidine 262 each coordinate Zn(2+). Catalysis depends on proton acceptor residues glutamate 327 and histidine 328. Residues histidine 328, aspartate 361, glutamate 415, and histidine 420 each coordinate substrate. Aspartate 361 is a binding site for Zn(2+). Zn(2+) is bound at residue histidine 420.

Belongs to the histidinol dehydrogenase family. It depends on Zn(2+) as a cofactor.

The enzyme catalyses L-histidinol + 2 NAD(+) + H2O = L-histidine + 2 NADH + 3 H(+). It participates in amino-acid biosynthesis; L-histidine biosynthesis; L-histidine from 5-phospho-alpha-D-ribose 1-diphosphate: step 9/9. Functionally, catalyzes the sequential NAD-dependent oxidations of L-histidinol to L-histidinaldehyde and then to L-histidine. This Ruegeria pomeroyi (strain ATCC 700808 / DSM 15171 / DSS-3) (Silicibacter pomeroyi) protein is Histidinol dehydrogenase.